The sequence spans 156 residues: Small ribosomal subunit protein uS7 (156 aa).

This sequence belongs to the universal ribosomal protein uS7 family. As to quaternary structure, part of the 30S ribosomal subunit. Contacts proteins S9 and S11.

In terms of biological role, one of the primary rRNA binding proteins, it binds directly to 16S rRNA where it nucleates assembly of the head domain of the 30S subunit. Is located at the subunit interface close to the decoding center, probably blocks exit of the E-site tRNA. The protein is Small ribosomal subunit protein uS7 of Chelativorans sp. (strain BNC1).